Reading from the N-terminus, the 355-residue chain is tRNA N6-adenosine threonylcarbamoyltransferase (355 aa).

Fe cation is bound by residues H110 and H114. Substrate-binding positions include 132–136 (LVSGG), D165, G178, D182, and N288. D316 contacts Fe cation.

It belongs to the KAE1 / TsaD family. The cofactor is Fe(2+).

The protein resides in the cytoplasm. It catalyses the reaction L-threonylcarbamoyladenylate + adenosine(37) in tRNA = N(6)-L-threonylcarbamoyladenosine(37) in tRNA + AMP + H(+). Functionally, required for the formation of a threonylcarbamoyl group on adenosine at position 37 (t(6)A37) in tRNAs that read codons beginning with adenine. Is involved in the transfer of the threonylcarbamoyl moiety of threonylcarbamoyl-AMP (TC-AMP) to the N6 group of A37, together with TsaE and TsaB. TsaD likely plays a direct catalytic role in this reaction. In Lawsonia intracellularis (strain PHE/MN1-00), this protein is tRNA N6-adenosine threonylcarbamoyltransferase.